We begin with the raw amino-acid sequence, 511 residues long: Histidine ammonia-lyase (511 aa).

Positions 142 to 144 (ASG) form a cross-link, 5-imidazolinone (Ala-Gly). Ser143 bears the 2,3-didehydroalanine (Ser) mark.

The protein belongs to the PAL/histidase family. Contains an active site 4-methylidene-imidazol-5-one (MIO), which is formed autocatalytically by cyclization and dehydration of residues Ala-Ser-Gly.

It localises to the cytoplasm. The enzyme catalyses L-histidine = trans-urocanate + NH4(+). The protein operates within amino-acid degradation; L-histidine degradation into L-glutamate; N-formimidoyl-L-glutamate from L-histidine: step 1/3. The protein is Histidine ammonia-lyase of Caulobacter sp. (strain K31).